We begin with the raw amino-acid sequence, 824 residues long: Leucine--tRNA ligase (824 aa).

The 'HIGH' region motif lies at 42–52 (PYPSGKIHMGH). The 'KMSKS' region signature appears at 581–585 (KMSKS). An ATP-binding site is contributed by lysine 584.

This sequence belongs to the class-I aminoacyl-tRNA synthetase family.

Its subcellular location is the cytoplasm. It catalyses the reaction tRNA(Leu) + L-leucine + ATP = L-leucyl-tRNA(Leu) + AMP + diphosphate. In Geobacter sp. (strain M21), this protein is Leucine--tRNA ligase.